We begin with the raw amino-acid sequence, 89 residues long: Small ribosomal subunit protein uS14A (89 aa).

Belongs to the universal ribosomal protein uS14 family. In terms of assembly, part of the 30S ribosomal subunit. Contacts proteins S3 and S10.

Its function is as follows. Binds 16S rRNA, required for the assembly of 30S particles and may also be responsible for determining the conformation of the 16S rRNA at the A site. This Levilactobacillus brevis (strain ATCC 367 / BCRC 12310 / CIP 105137 / JCM 1170 / LMG 11437 / NCIMB 947 / NCTC 947) (Lactobacillus brevis) protein is Small ribosomal subunit protein uS14A.